We begin with the raw amino-acid sequence, 460 residues long: Argininosuccinate lyase (460 aa).

It belongs to the lyase 1 family. Argininosuccinate lyase subfamily.

It is found in the cytoplasm. It catalyses the reaction 2-(N(omega)-L-arginino)succinate = fumarate + L-arginine. The protein operates within amino-acid biosynthesis; L-arginine biosynthesis; L-arginine from L-ornithine and carbamoyl phosphate: step 3/3. This chain is Argininosuccinate lyase, found in Campylobacter jejuni (strain RM1221).